The chain runs to 141 residues: 3-hydroxyacyl-[acyl-carrier-protein] dehydratase FabZ (141 aa).

His-49 is a catalytic residue.

It belongs to the thioester dehydratase family. FabZ subfamily.

It localises to the cytoplasm. The catalysed reaction is a (3R)-hydroxyacyl-[ACP] = a (2E)-enoyl-[ACP] + H2O. Its function is as follows. Involved in unsaturated fatty acids biosynthesis. Catalyzes the dehydration of short chain beta-hydroxyacyl-ACPs and long chain saturated and unsaturated beta-hydroxyacyl-ACPs. The sequence is that of 3-hydroxyacyl-[acyl-carrier-protein] dehydratase FabZ (fabZ2) from Enterococcus faecalis (strain ATCC 700802 / V583).